The following is an 84-amino-acid chain: UPF0297 protein Csac_1773 (84 aa).

It belongs to the UPF0297 family.

The sequence is that of UPF0297 protein Csac_1773 from Caldicellulosiruptor saccharolyticus (strain ATCC 43494 / DSM 8903 / Tp8T 6331).